We begin with the raw amino-acid sequence, 546 residues long: MKNNWIDVLDESLVKDFYNNQTSEEQQEGLNTTLSFGTAGIRGKFGLGEGRLNKFTVSKVALGFAHYLTSSIAHPVVVIHYDTRHLSPEFAQIIANILASHDIKVYLADTYRTTPDLSFAVRYLQADAGVMITASHNPKDYNGIKVYGEDGAQLSTDASAQLSTYIDKLGHPLHINVPSLTTEQQSLIHSVPSEVREDYFKNVQDLVGTIPQSDLKVVFTSLHGTSVPIVPDILSSLNFNQFELVASQCEPDSDFSSVASANPEDHKAFDQSIELANLIDADLLIGTDPDADRLGIVERDAEGNIYYYNGNQIGALLLNYRIKQTEGLPNRIMFQSIVSGGLAKSLAQYHNVNFKEVLTGFKYIAAEIRHLSPEQNFIFGYEESYGFLARPFVRDKDAIQIVPLMIKYAAELKNEGRMLKDELEDITRNVGNFNDKLFSHTFEGTQGKAKIENIMTQFRSETPTEMCGLKVIAIEDFETGKKTDLQNDEVSDITLPKANVIKIYFNEGFIALRPSGTEPKIKLYVSLSCDHFDVIAQKINDAIFNS.

S135 functions as the Phosphoserine intermediate in the catalytic mechanism. The Mg(2+) site is built by S135, D288, D290, and D292.

The protein belongs to the phosphohexose mutase family. Mg(2+) is required as a cofactor.

It catalyses the reaction alpha-D-glucose 1-phosphate = alpha-D-glucose 6-phosphate. The protein operates within glycolipid metabolism; diglucosyl-diacylglycerol biosynthesis. Catalyzes the interconversion between glucose-6-phosphate and alpha-glucose-1-phosphate. This is the first step in the biosynthesis of diglucosyl-diacylglycerol (Glc2-DAG), i.e. a glycolipid found in the membrane, which is also used as a membrane anchor for lipoteichoic acid (LTA). The polypeptide is Phosphoglucomutase (pgcA) (Staphylococcus epidermidis (strain ATCC 35984 / DSM 28319 / BCRC 17069 / CCUG 31568 / BM 3577 / RP62A)).